Here is a 542-residue protein sequence, read N- to C-terminus: CTP synthase (542 aa).

Positions 1–265 (MARYIFITGG…DSEVLCAFGI (265 aa)) are amidoligase domain. S13 lines the CTP pocket. Residue S13 coordinates UTP. Residue 14-19 (SLGKGI) participates in ATP binding. Y54 contributes to the L-glutamine binding site. Position 71 (D71) interacts with ATP. Residues D71 and E139 each coordinate Mg(2+). CTP-binding positions include 146 to 148 (DIE), 186 to 191 (KTKPTQ), and K222. Residues 186–191 (KTKPTQ) and K222 each bind UTP. The Glutamine amidotransferase type-1 domain maps to 291–541 (TIAVVGKYTG…IEATVEQSRL (251 aa)). An L-glutamine-binding site is contributed by A353. C380 serves as the catalytic Nucleophile; for glutamine hydrolysis. Residues 381-384 (FGMQ), E404, and R469 each bind L-glutamine. Catalysis depends on residues H514 and E516.

It belongs to the CTP synthase family. As to quaternary structure, homotetramer.

The enzyme catalyses UTP + L-glutamine + ATP + H2O = CTP + L-glutamate + ADP + phosphate + 2 H(+). The catalysed reaction is L-glutamine + H2O = L-glutamate + NH4(+). It catalyses the reaction UTP + NH4(+) + ATP = CTP + ADP + phosphate + 2 H(+). Its pathway is pyrimidine metabolism; CTP biosynthesis via de novo pathway; CTP from UDP: step 2/2. Allosterically activated by GTP, when glutamine is the substrate; GTP has no effect on the reaction when ammonia is the substrate. The allosteric effector GTP functions by stabilizing the protein conformation that binds the tetrahedral intermediate(s) formed during glutamine hydrolysis. Inhibited by the product CTP, via allosteric rather than competitive inhibition. Functionally, catalyzes the ATP-dependent amination of UTP to CTP with either L-glutamine or ammonia as the source of nitrogen. Regulates intracellular CTP levels through interactions with the four ribonucleotide triphosphates. This Bartonella quintana (strain Toulouse) (Rochalimaea quintana) protein is CTP synthase.